The chain runs to 360 residues: Photosystem II protein D1 (360 aa).

Helical transmembrane passes span 29 to 46 (YIGWFGCLMIPTLLTAAS), 118 to 133 (HFLIGVACWMGREWEL), and 142 to 156 (WIFVAFSAPVAAASA). Residue His118 participates in chlorophyll a binding. Trp126 lines the pheophytin a pocket. 2 residues coordinate [CaMn4O5] cluster: Asp170 and Glu189. The chain crosses the membrane as a helical span at residues 197 to 218 (FHMAGVAGVFGGSLFSAMHGSL). His198 provides a ligand contact to chlorophyll a. A quinone-binding positions include His215 and 264–265 (SF). His215 is a binding site for Fe cation. Residue His272 coordinates Fe cation. A helical membrane pass occupies residues 274 to 288 (FLAAWPVVGIWLTAL). [CaMn4O5] cluster-binding residues include His332, Glu333, Asp342, and Ala344. Positions 345-360 (SNEILPVAISAPSVVG) are excised as a propeptide.

Belongs to the reaction center PufL/M/PsbA/D family. In terms of assembly, PSII is composed of 1 copy each of membrane proteins PsbA, PsbB, PsbC, PsbD, PsbE, PsbF, PsbH, PsbI, PsbJ, PsbK, PsbL, PsbM, PsbT, PsbX, PsbY, PsbZ, Psb30/Ycf12, at least 3 peripheral proteins of the oxygen-evolving complex and a large number of cofactors. It forms dimeric complexes. Requires The D1/D2 heterodimer binds P680, chlorophylls that are the primary electron donor of PSII, and subsequent electron acceptors. It shares a non-heme iron and each subunit binds pheophytin, quinone, additional chlorophylls, carotenoids and lipids. D1 provides most of the ligands for the Mn4-Ca-O5 cluster of the oxygen-evolving complex (OEC). There is also a Cl(-1) ion associated with D1 and D2, which is required for oxygen evolution. The PSII complex binds additional chlorophylls, carotenoids and specific lipids. as cofactor. Post-translationally, tyr-161 forms a radical intermediate that is referred to as redox-active TyrZ, YZ or Y-Z. C-terminally processed by CTPA; processing is essential to allow assembly of the oxygen-evolving complex and thus photosynthetic growth.

The protein resides in the plastid. It localises to the chloroplast thylakoid membrane. It carries out the reaction 2 a plastoquinone + 4 hnu + 2 H2O = 2 a plastoquinol + O2. Its function is as follows. Photosystem II (PSII) is a light-driven water:plastoquinone oxidoreductase that uses light energy to abstract electrons from H(2)O, generating O(2) and a proton gradient subsequently used for ATP formation. It consists of a core antenna complex that captures photons, and an electron transfer chain that converts photonic excitation into a charge separation. The D1/D2 (PsbA/PsbD) reaction center heterodimer binds P680, the primary electron donor of PSII as well as several subsequent electron acceptors. This is Photosystem II protein D1 from Ectocarpus siliculosus (Brown alga).